Reading from the N-terminus, the 350-residue chain is Very-long-chain 3-oxoacyl-CoA reductase (350 aa).

Residues 20–40 (ALLFSLLFGVFKLTTFTLRFA) traverse the membrane as a helical segment. Val66, Asp120, Asn147, Tyr221, Lys225, Val254, and Ser256 together coordinate NADP(+). Tyr221 functions as the Proton donor in the catalytic mechanism. Residue Lys225 is the Lowers pKa of active site Tyr of the active site.

This sequence belongs to the short-chain dehydrogenases/reductases (SDR) family.

Its subcellular location is the endoplasmic reticulum membrane. The enzyme catalyses a very-long-chain (3R)-3-hydroxyacyl-CoA + NADP(+) = a very-long-chain 3-oxoacyl-CoA + NADPH + H(+). Its pathway is lipid metabolism; fatty acid biosynthesis. Functionally, component of the microsomal membrane bound fatty acid elongation system, which produces the 26-carbon very long-chain fatty acids (VLCFA) from palmitate. Catalyzes the reduction of the 3-ketoacyl-CoA intermediate that is formed in each cycle of fatty acid elongation. VLCFAs serve as precursors for ceramide and sphingolipids. This Lodderomyces elongisporus (strain ATCC 11503 / CBS 2605 / JCM 1781 / NBRC 1676 / NRRL YB-4239) (Yeast) protein is Very-long-chain 3-oxoacyl-CoA reductase.